Here is a 420-residue protein sequence, read N- to C-terminus: Gamma-glutamyl phosphate reductase (420 aa).

The protein belongs to the gamma-glutamyl phosphate reductase family.

The protein localises to the cytoplasm. It catalyses the reaction L-glutamate 5-semialdehyde + phosphate + NADP(+) = L-glutamyl 5-phosphate + NADPH + H(+). It functions in the pathway amino-acid biosynthesis; L-proline biosynthesis; L-glutamate 5-semialdehyde from L-glutamate: step 2/2. Catalyzes the NADPH-dependent reduction of L-glutamate 5-phosphate into L-glutamate 5-semialdehyde and phosphate. The product spontaneously undergoes cyclization to form 1-pyrroline-5-carboxylate. This chain is Gamma-glutamyl phosphate reductase, found in Cereibacter sphaeroides (strain ATCC 17023 / DSM 158 / JCM 6121 / CCUG 31486 / LMG 2827 / NBRC 12203 / NCIMB 8253 / ATH 2.4.1.) (Rhodobacter sphaeroides).